An 835-amino-acid polypeptide reads, in one-letter code: Phosphatidylinositol 4-kinase beta (835 aa).

Disordered stretches follow at residues 1-61 (MGDT…PLDV), 99-139 (SSAS…VRRR), and 267-341 (PSSQ…PVRL). Positions 19–59 (SPSTSTTSSLSLPSSPSSGPHPLTSSSPSTSEGLPTSSPPL) are enriched in low complexity. The PIK helical domain occupies 59–262 (LDVISEGLGE…GTKLRKLILS (204 aa)). Composition is skewed to basic and acidic residues over residues 125 to 134 (ISEEEVEPIK) and 267 to 276 (PSSQRIRREV). The span at 277-288 (PQPPPPYPPPLH) shows a compositional bias: pro residues. Residues 311 to 332 (DATVSISLSSNLKRTASNPKVE) show a composition bias toward polar residues. Positions 554 to 820 (EPWQEKVRRI…MVDGSMRSIT (267 aa)) constitute a PI3K/PI4K catalytic domain. The segment at 560–566 (VRRIREG) is G-loop. The catalytic loop stretch occupies residues 687–695 (QVKDRHNGN). Residues 706–730 (HIDFGFILSSSPRNLGFETSAFKLT) form an activation loop region.

This sequence belongs to the PI3/PI4-kinase family. Type III PI4K subfamily. Mg(2+) serves as cofactor. The cofactor is Mn(2+). In terms of tissue distribution, expressed in the inner ear otic vesicles.

It localises to the endomembrane system. Its subcellular location is the mitochondrion outer membrane. It is found in the rough endoplasmic reticulum membrane. The enzyme catalyses a 1,2-diacyl-sn-glycero-3-phospho-(1D-myo-inositol) + ATP = a 1,2-diacyl-sn-glycero-3-phospho-(1D-myo-inositol 4-phosphate) + ADP + H(+). Functionally, phosphorylates phosphatidylinositol (PI) in the first committed step in the production of the second messenger inositol-1,4,5,-trisphosphate (PIP). May play an important role the in inner ear development. This Danio rerio (Zebrafish) protein is Phosphatidylinositol 4-kinase beta (pi4kb).